We begin with the raw amino-acid sequence, 156 residues long: 3-dehydroquinate dehydratase 1 (156 aa).

Tyr-32 (proton acceptor) is an active-site residue. Substrate is bound by residues Asn-84, His-90, and Asp-97. Catalysis depends on His-110, which acts as the Proton donor. Substrate contacts are provided by residues 111-112 and Arg-121; that span reads LS.

The protein belongs to the type-II 3-dehydroquinase family. Homododecamer.

The enzyme catalyses 3-dehydroquinate = 3-dehydroshikimate + H2O. It participates in metabolic intermediate biosynthesis; chorismate biosynthesis; chorismate from D-erythrose 4-phosphate and phosphoenolpyruvate: step 3/7. Its function is as follows. Catalyzes a trans-dehydration via an enolate intermediate. In Ralstonia nicotianae (strain ATCC BAA-1114 / GMI1000) (Ralstonia solanacearum), this protein is 3-dehydroquinate dehydratase 1 (aroQ1).